The sequence spans 390 residues: Serine/threonine/tyrosine-protein kinase HT1 (390 aa).

Residues Leu86–Leu359 enclose the Protein kinase domain. ATP contacts are provided by residues Phe92–Ile100 and Lys113. The active-site Proton acceptor is the Asp212.

It belongs to the protein kinase superfamily. Ser/Thr protein kinase family. As to quaternary structure, interacts with DTX56. Binds to MPK4 and MPK12. Associates to CBC1 and CBC2. In terms of processing, autophosphorylated. As to expression, mainly localizes in guard cells. Expressed at low level in leaves, stems, roots and flowers.

The protein resides in the cell membrane. The enzyme catalyses L-seryl-[protein] + ATP = O-phospho-L-seryl-[protein] + ADP + H(+). It catalyses the reaction L-threonyl-[protein] + ATP = O-phospho-L-threonyl-[protein] + ADP + H(+). The catalysed reaction is L-tyrosyl-[protein] + ATP = O-phospho-L-tyrosyl-[protein] + ADP + H(+). Inhibited by MPK4 and MPK12. Serine/threonine/tyrosine kinase involved in the control of stomatal movement in response to CO(2). Functions as a major negative regulator of CO(2)-induced stomatal closing. Does not seem to be involved in stomatal closure in response to abscisic acid (ABA) or light. Involved in the control of red light-induced stomatal opening. Is epistatic to SRK2E/OST1 function during stomatal responses to red light and altered CO(2). Phosphorylates SRK2E/OST1 and GHR1 to prevents SRK2E/OST1- and GHR1-induced activation of SLAC1, thus preventing stomatal closure. Mediates the phosphorylation of CBC1 and CBC2. The polypeptide is Serine/threonine/tyrosine-protein kinase HT1 (Arabidopsis thaliana (Mouse-ear cress)).